A 222-amino-acid chain; its full sequence is MKPDIKICGLKTPEAIDRALERGATHIGFIFFEKSPRYIEPDLAGKLAEPARGKAKIVAVVVDPSNDELDEIVSLLKPDILQLHGNESPEHVLTIKALYGLPVMKVFSVRTADDLKRVEAYIGIADRFLFDAKAPKGSELPGGNGISFDWSLLSWLDGSIDYMLSGGLNKDNVADALVKTKARGIDVSSGVETAPGVKSVAMIDEFFDAVEEADAPVMASGS.

Belongs to the TrpF family.

It carries out the reaction N-(5-phospho-beta-D-ribosyl)anthranilate = 1-(2-carboxyphenylamino)-1-deoxy-D-ribulose 5-phosphate. It participates in amino-acid biosynthesis; L-tryptophan biosynthesis; L-tryptophan from chorismate: step 3/5. In Rhizobium leguminosarum bv. trifolii (strain WSM2304), this protein is N-(5'-phosphoribosyl)anthranilate isomerase.